Reading from the N-terminus, the 393-residue chain is 5-amino-6-(D-ribitylamino)uracil--L-tyrosine 4-hydroxyphenyl transferase (393 aa).

Residues 67 to 322 (VTYVINRNIN…GQWIVNHQPS (256 aa)) form the Radical SAM core domain. 3 residues coordinate [4Fe-4S] cluster: Cys-81, Cys-85, and Cys-88.

This sequence belongs to the radical SAM superfamily. CofH family. In terms of assembly, consists of two subunits, CofG and CofH. [4Fe-4S] cluster serves as cofactor.

The catalysed reaction is 5-amino-6-(D-ribitylamino)uracil + L-tyrosine + S-adenosyl-L-methionine = 5-amino-5-(4-hydroxybenzyl)-6-(D-ribitylimino)-5,6-dihydrouracil + 2-iminoacetate + 5'-deoxyadenosine + L-methionine + H(+). Its pathway is cofactor biosynthesis; coenzyme F0 biosynthesis. Catalyzes the radical-mediated synthesis of 5-amino-5-(4-hydroxybenzyl)-6-(D-ribitylimino)-5,6-dihydrouracil from 5-amino-6-(D-ribitylamino)uracil and L-tyrosine. In Thermosynechococcus vestitus (strain NIES-2133 / IAM M-273 / BP-1), this protein is 5-amino-6-(D-ribitylamino)uracil--L-tyrosine 4-hydroxyphenyl transferase.